A 120-amino-acid chain; its full sequence is MKTSREKLQRRAQRVRTKLRRVAEGRPRLSVSRSHKNISVQIIDDEKGITLASASTLEKEVIASAKSSGNVEAAALVGKAIAERAKKAGVEDVVFDRGGYMFHGRVKALADAAREGGLKF.

It belongs to the universal ribosomal protein uL18 family. Part of the 50S ribosomal subunit; part of the 5S rRNA/L5/L18/L25 subcomplex. Contacts the 5S and 23S rRNAs.

Functionally, this is one of the proteins that bind and probably mediate the attachment of the 5S RNA into the large ribosomal subunit, where it forms part of the central protuberance. The protein is Large ribosomal subunit protein uL18 of Hyphomonas neptunium (strain ATCC 15444).